The sequence spans 1436 residues: Probable deoxyribonuclease RhsB (1436 aa).

Residues 16 to 42 form a disordered region; it reads HAGNRPNPPADRPQPCQGKPPTSPGKT. Transmembrane regions (helical) follow at residues 48–68 and 70–90; these read FLGA…VAAA and VFLV…LAVF. 5 YD repeats span residues 486 to 521, 569 to 605, 612 to 647, 766 to 799, and 847 to 879; these read YNTA…CADG, YDEV…DGSG, YDDA…GPDA, DLLT…PDGS, and YDAR…VSSA.

This sequence belongs to the RHS/WapA nuclease family.

It localises to the membrane. Toxic component of a toxin-immunity protein module, which functions as a cellular contact-dependent growth inhibition (CDI) system. This protein may be a nuclease that is specifically inhibited by its cognate immunity protein RhsBI. Upon expression of the C-terminus (residues 1284-1436) in E.coli growth is inhibited, cells elongate, nucleoids condense and plasmid DNA is degraded; these effects are blocked specifically by cognate immunity protein RshIB. Cell contact is necessary for growth inhibition. In Dickeya dadantii (strain 3937) (Erwinia chrysanthemi (strain 3937)), this protein is Probable deoxyribonuclease RhsB (rhsB).